The primary structure comprises 268 residues: MNMKEISKVVDLVRESNPLVHNITNVVVTNFTANGLLALGASPVMAYAKEEVAEMASIAGALVLNMGTLRPDEVEAMLLAGKSANRNDVPVLFDPVGAGATSYRTEVARHIPAEIELAIIRGNAAEIANVINEKWEIKGVDAGAGNGNVVSIAKQAADELNTVAVITGKEDVVTDGERTIVIRNGHSILTKITGTGCLLTSVIGAFVAVEKDYVKAAVAALTFYGVAAELAAAKTVEKGPGSFQIEFLNQLANTTSGDIEKYGKIEVI.

A substrate-binding site is contributed by Met45. Residues Arg121 and Thr167 each coordinate ATP. Gly194 lines the substrate pocket.

This sequence belongs to the Thz kinase family. The cofactor is Mg(2+).

The catalysed reaction is 5-(2-hydroxyethyl)-4-methylthiazole + ATP = 4-methyl-5-(2-phosphooxyethyl)-thiazole + ADP + H(+). The protein operates within cofactor biosynthesis; thiamine diphosphate biosynthesis; 4-methyl-5-(2-phosphoethyl)-thiazole from 5-(2-hydroxyethyl)-4-methylthiazole: step 1/1. Functionally, catalyzes the phosphorylation of the hydroxyl group of 4-methyl-5-beta-hydroxyethylthiazole (THZ). In Bacillus thuringiensis (strain Al Hakam), this protein is Hydroxyethylthiazole kinase.